Here is a 341-residue protein sequence, read N- to C-terminus: UDP-glucose 4-epimerase (341 aa).

This sequence belongs to the polysaccharide synthase family.

It carries out the reaction UDP-alpha-D-glucose = UDP-alpha-D-galactose. Its function is as follows. Epimerizes UDP-galactose to UDP-glucose. In Rickettsia typhi (strain ATCC VR-144 / Wilmington), this protein is UDP-glucose 4-epimerase (capD).